An 87-amino-acid chain; its full sequence is MSNPTVLDQIRHIIAQALDKPVETIHAEQSFRRDLGADSLDSVEIVMAIEDQFAVEFDEDSTAAVDTVQDLVTYIEAALASRGAQTA.

In terms of domain architecture, Carrier spans 1–79; sequence MSNPTVLDQI…DLVTYIEAAL (79 aa). The residue at position 39 (serine 39) is an O-(pantetheine 4'-phosphoryl)serine.

It belongs to the acyl carrier protein (ACP) family. 4'-phosphopantetheine is transferred from CoA to a specific serine of apo-ACP by AcpS. This modification is essential for activity because fatty acids are bound in thioester linkage to the sulfhydryl of the prosthetic group.

Its subcellular location is the cytoplasm. Its pathway is lipid metabolism; fatty acid biosynthesis. Carrier of the growing fatty acid chain in fatty acid biosynthesis. The sequence is that of Acyl carrier protein 3 from Ralstonia nicotianae (strain ATCC BAA-1114 / GMI1000) (Ralstonia solanacearum).